The primary structure comprises 64 residues: Large ribosomal subunit protein bL32 (64 aa).

The tract at residues 1–23 is disordered; sequence MAVQKSRVTPSRRGQRRSHDALA.

Belongs to the bacterial ribosomal protein bL32 family.

This is Large ribosomal subunit protein bL32 from Xylella fastidiosa (strain M23).